The primary structure comprises 538 residues: Nucleolar protein 12 (538 aa).

Disordered stretches follow at residues 1-25 (MGKK…LPFL), 41-203 (KSAG…KSNR), 336-378 (ETDP…ASTR), 433-455 (AKKL…LGEG), and 476-538 (KAEG…KMAK). A compositionally biased stretch (acidic residues) spans 63 to 92 (PEDDVEKEEDDEEISELEEDLQSEDEDMQD). Positions 64–156 (EDDVEKEEDD…KAKRQKVEEG (93 aa)) form a coiled coil. 3 stretches are compositionally biased toward basic and acidic residues: residues 127–144 (TYMR…EKRR), 151–173 (QKVE…GRDE), and 182–202 (TVPR…EKSN). 2 consecutive RRM domains span residues 203–315 (RTVF…SVAH) and 323–435 (RCVF…RAKK). The span at 502–521 (IKIKTKSRGSKGKPKNRSAK) shows a compositional bias: basic residues.

This sequence belongs to the RRM RBM34 family.

It localises to the nucleus. Its subcellular location is the nucleolus. Functionally, involved in pre-25S rRNA processing. The polypeptide is Nucleolar protein 12 (nop12) (Aspergillus fumigatus (strain ATCC MYA-4609 / CBS 101355 / FGSC A1100 / Af293) (Neosartorya fumigata)).